We begin with the raw amino-acid sequence, 734 residues long: Photosystem I P700 chlorophyll a apoprotein A2 (734 aa).

8 helical membrane passes run 46–69, 135–158, 175–199, 273–291, 330–353, 369–395, 417–439, and 517–535; these read IFASHFGQLAIIFLWTSGNLFHVA, LYTGALFLLFLSALSLIGGWLHLQ, LNHHLSGLFGVSSLAWTGHLVHVAI, MAHHHLAIAILFLIAGHMY, IHFQLGLALASLGVITSLVAQHMY, AALYTHHQYIAGFIMTGAFAHGAIFFI, AIISHLSWASLFLGFHTLGLYVH, and FLVHHAIALGLHTTTLILV. Residues Cys-559 and Cys-568 each contribute to the [4Fe-4S] cluster site. A run of 2 helical transmembrane segments spans residues 575 to 596 and 643 to 665; these read AFYLAVFWMLNTIGWVTFYWHW and LSVWAWMFLFGHLVWATGFMFLI. 3 residues coordinate chlorophyll a: His-654, Met-662, and Tyr-670. Residue Trp-671 coordinates phylloquinone. Residues 707–727 form a helical membrane-spanning segment; sequence LVGLAHFSVGYIFTYAAFLIA.

The protein belongs to the PsaA/PsaB family. As to quaternary structure, the PsaA/B heterodimer binds the P700 chlorophyll special pair and subsequent electron acceptors. PSI consists of a core antenna complex that captures photons, and an electron transfer chain that converts photonic excitation into a charge separation. The eukaryotic PSI reaction center is composed of at least 11 subunits. Requires P700 is a chlorophyll a/chlorophyll a' dimer, A0 is one or more chlorophyll a, A1 is one or both phylloquinones and FX is a shared 4Fe-4S iron-sulfur center. as cofactor.

The protein resides in the plastid. It is found in the chloroplast thylakoid membrane. The enzyme catalyses reduced [plastocyanin] + hnu + oxidized [2Fe-2S]-[ferredoxin] = oxidized [plastocyanin] + reduced [2Fe-2S]-[ferredoxin]. PsaA and PsaB bind P700, the primary electron donor of photosystem I (PSI), as well as the electron acceptors A0, A1 and FX. PSI is a plastocyanin-ferredoxin oxidoreductase, converting photonic excitation into a charge separation, which transfers an electron from the donor P700 chlorophyll pair to the spectroscopically characterized acceptors A0, A1, FX, FA and FB in turn. Oxidized P700 is reduced on the lumenal side of the thylakoid membrane by plastocyanin. This is Photosystem I P700 chlorophyll a apoprotein A2 from Capsella bursa-pastoris (Shepherd's purse).